Reading from the N-terminus, the 166-residue chain is Large ribosomal subunit protein uL10 (166 aa).

This sequence belongs to the universal ribosomal protein uL10 family. As to quaternary structure, part of the ribosomal stalk of the 50S ribosomal subunit. The N-terminus interacts with L11 and the large rRNA to form the base of the stalk. The C-terminus forms an elongated spine to which L12 dimers bind in a sequential fashion forming a multimeric L10(L12)X complex.

Forms part of the ribosomal stalk, playing a central role in the interaction of the ribosome with GTP-bound translation factors. This chain is Large ribosomal subunit protein uL10, found in Staphylococcus haemolyticus (strain JCSC1435).